We begin with the raw amino-acid sequence, 83 residues long: Small ribosomal subunit protein bS16 (83 aa).

Belongs to the bacterial ribosomal protein bS16 family.

This chain is Small ribosomal subunit protein bS16, found in Shewanella amazonensis (strain ATCC BAA-1098 / SB2B).